A 608-amino-acid chain; its full sequence is Lysophospholipase 2 (608 aa).

An N-terminal signal peptide occupies residues 1 to 17 (MLVWQSILLFLVGCVLS). The PLA2c domain occupies 30-564 (QCPEGKLTRS…ENYCWDGTIY (535 aa)). 6 N-linked (GlcNAc...) asparagine glycosylation sites follow: Asn-259, Asn-365, Asn-450, Asn-464, Asn-491, and Asn-572.

It belongs to the lysophospholipase family.

It localises to the secreted. The catalysed reaction is a 1-acyl-sn-glycero-3-phosphocholine + H2O = sn-glycerol 3-phosphocholine + a fatty acid + H(+). Its function is as follows. Catalyzes the release of fatty acids from lysophospholipids. Phospholipase B may well contribute to pathogenicity by abetting the fungus in damaging and traversing host cell membranes, processes which likely increase the rapidity of disseminated infection. The polypeptide is Lysophospholipase 2 (PLB2) (Candida albicans (Yeast)).